We begin with the raw amino-acid sequence, 485 residues long: GlcNAc-binding protein A (485 aa).

The first 29 residues, 1 to 29 (MKKQPQKTLLAIALSVVSGTAMSHGYVSA), serve as a signal peptide directing secretion. The Chitin-binding type-4 domain occupies 30-200 (VENGVAEARV…SFYNVIDVKF (171 aa)). The region spanning 437–478 (AGTKVLASDGAIYQCKPFPYSGYCVQWTPTATQYQPGTGSHW) is the Chitin-binding type-3 domain.

It belongs to the GbpA family.

It localises to the secreted. Its function is as follows. Probably interacts with GlcNAc residues. May promote attachment to both epithelial cell surfaces and chitin. This is GlcNAc-binding protein A from Vibrio vulnificus (strain YJ016).